The chain runs to 325 residues: Holliday junction branch migration complex subunit RuvB (325 aa).

The interval 1–181 is large ATPase domain (RuvB-L); that stretch reads MENRLINPVE…FGIVQRLEFY (181 aa). ATP-binding positions include isoleucine 20, arginine 21, glycine 62, lysine 65, threonine 66, threonine 67, 128 to 130, arginine 171, tyrosine 181, and arginine 218; that span reads EDF. Threonine 66 serves as a coordination point for Mg(2+). The small ATPAse domain (RuvB-S) stretch occupies residues 182–252; sequence NIEDLTTIVS…IADSALDMLA (71 aa). The interval 255-325 is head domain (RuvB-H); the sequence is RRGLDHLDRR…VLTQMAIDQL (71 aa). Positions 291, 310, and 315 each coordinate DNA.

Belongs to the RuvB family. As to quaternary structure, homohexamer. Forms an RuvA(8)-RuvB(12)-Holliday junction (HJ) complex. HJ DNA is sandwiched between 2 RuvA tetramers; dsDNA enters through RuvA and exits via RuvB. An RuvB hexamer assembles on each DNA strand where it exits the tetramer. Each RuvB hexamer is contacted by two RuvA subunits (via domain III) on 2 adjacent RuvB subunits; this complex drives branch migration. In the full resolvosome a probable DNA-RuvA(4)-RuvB(12)-RuvC(2) complex forms which resolves the HJ.

It localises to the cytoplasm. It carries out the reaction ATP + H2O = ADP + phosphate + H(+). Its function is as follows. The RuvA-RuvB-RuvC complex processes Holliday junction (HJ) DNA during genetic recombination and DNA repair, while the RuvA-RuvB complex plays an important role in the rescue of blocked DNA replication forks via replication fork reversal (RFR). RuvA specifically binds to HJ cruciform DNA, conferring on it an open structure. The RuvB hexamer acts as an ATP-dependent pump, pulling dsDNA into and through the RuvAB complex. RuvB forms 2 homohexamers on either side of HJ DNA bound by 1 or 2 RuvA tetramers; 4 subunits per hexamer contact DNA at a time. Coordinated motions by a converter formed by DNA-disengaged RuvB subunits stimulates ATP hydrolysis and nucleotide exchange. Immobilization of the converter enables RuvB to convert the ATP-contained energy into a lever motion, pulling 2 nucleotides of DNA out of the RuvA tetramer per ATP hydrolyzed, thus driving DNA branch migration. The RuvB motors rotate together with the DNA substrate, which together with the progressing nucleotide cycle form the mechanistic basis for DNA recombination by continuous HJ branch migration. Branch migration allows RuvC to scan DNA until it finds its consensus sequence, where it cleaves and resolves cruciform DNA. This is Holliday junction branch migration complex subunit RuvB from Psychrobacter sp. (strain PRwf-1).